Consider the following 235-residue polypeptide: Sugar fermentation stimulation protein homolog (235 aa).

Belongs to the SfsA family.

The polypeptide is Sugar fermentation stimulation protein homolog (Nitrosococcus oceani (strain ATCC 19707 / BCRC 17464 / JCM 30415 / NCIMB 11848 / C-107)).